Consider the following 138-residue polypeptide: Large-conductance mechanosensitive channel (138 aa).

3 consecutive transmembrane segments (helical) span residues 19 to 39 (VGVI…GDII), 40 to 60 (MPII…IPLA), and 81 to 101 (GSFL…FMVI).

This sequence belongs to the MscL family. As to quaternary structure, homopentamer.

The protein localises to the cell inner membrane. In terms of biological role, channel that opens in response to stretch forces in the membrane lipid bilayer. May participate in the regulation of osmotic pressure changes within the cell. The sequence is that of Large-conductance mechanosensitive channel from Bradyrhizobium sp. (strain ORS 278).